We begin with the raw amino-acid sequence, 220 residues long: Octanoyltransferase (220 aa).

A BPL/LPL catalytic domain is found at 31–206 (DDTPDEVWLV…ELVTLLDYEQ (176 aa)). Substrate contacts are provided by residues 70-77 (RGGQVTYH), 137-139 (SLG), and 150-152 (GLA). Catalysis depends on Cys-168, which acts as the Acyl-thioester intermediate.

The protein belongs to the LipB family.

The protein localises to the cytoplasm. It catalyses the reaction octanoyl-[ACP] + L-lysyl-[protein] = N(6)-octanoyl-L-lysyl-[protein] + holo-[ACP] + H(+). Its pathway is protein modification; protein lipoylation via endogenous pathway; protein N(6)-(lipoyl)lysine from octanoyl-[acyl-carrier-protein]: step 1/2. Functionally, catalyzes the transfer of endogenously produced octanoic acid from octanoyl-acyl-carrier-protein onto the lipoyl domains of lipoate-dependent enzymes. Lipoyl-ACP can also act as a substrate although octanoyl-ACP is likely to be the physiological substrate. This Vibrio campbellii (strain ATCC BAA-1116) protein is Octanoyltransferase.